A 1149-amino-acid polypeptide reads, in one-letter code: Potassium channel subfamily U member 1 (1149 aa).

Over 1–24 the chain is Extracellular; that stretch reads MFQTKLRNETWEDLPKMSCTTEIQ. Residues 25–45 form a helical membrane-spanning segment; sequence AAFILSSFVTFFSGLIILLIF. Topologically, residues 46-101 are cytoplasmic; it reads RLIWRSVKKWQIIKGTGIILELFTSGTIARSHVRSLHFQGQFRDHIEMLLSAQTFV. Residues 102 to 122 form a helical membrane-spanning segment; the sequence is GQVLVILVFVLSIGSLIIYFI. The Extracellular segment spans residues 123–138; that stretch reads NSADPVGSCSSYEDKT. A helical transmembrane segment spans residues 139 to 159; it reads IPIDLVFNAFFSFYFGLRFMA. The Cytoplasmic portion of the chain corresponds to 160–163; it reads ADDK. A helical transmembrane segment spans residues 164–184; the sequence is IKFWLEMNSIVDIFTIPPTFI. At 185–188 the chain is on the extracellular side; sequence SYYL. A helical; Voltage-sensor transmembrane segment spans residues 189-209; sequence KSNWLGLRFLRALRLLELPQI. Over 210–226 the chain is Cytoplasmic; that stretch reads LQILRAIKTSNSVKFSK. A helical membrane pass occupies residues 227 to 247; that stretch reads LLSIILSTWFTAAGFIHLVEN. Topologically, residues 248 to 259 are extracellular; sequence SGDPWLKGRNSQ. An intramembrane region (pore-forming) is located at residues 260-282; that stretch reads NISYFESIYLVMATTSTVGFGDV. The short motif at 276–279 is the Selectivity for potassium element; it reads TVGF. At 283–291 the chain is on the extracellular side; sequence VAKTSLGRT. Residues 292–312 form a helical membrane-spanning segment; that stretch reads FIMFFTLGSLILFANYIPEMV. Residues 313 to 1149 are Cytoplasmic-facing; that stretch reads ELFANKRKYT…EDPFAYSEPL (837 aa). RCK N-terminal domains lie at 331–473 and 713–884; these read KKFI…DNII and RNHI…EGSL. Disordered stretches follow at residues 828–854 and 1118–1149; these read QIDSSSDPSPSVSEETPGYTNGHNEKS and SQIPLGDNAKENERKTSDEVYDEDPFAYSEPL. Residues 830-840 show a composition bias toward low complexity; that stretch reads DSSSDPSPSVS. Residues 1125-1135 show a composition bias toward basic and acidic residues; sequence NAKENERKTSD.

This sequence belongs to the potassium channel family. Calcium-activated (TC 1.A.1.3) subfamily. KCa5.1/KCNU1 sub-subfamily. Homotetramer; which constitutes the activated potassium channel. Interacts with LRRC52; this interaction changes channel gating properties, such as shifting gating to more negative potentials at a given pH. Testis-specific.

The protein localises to the cell membrane. It localises to the cell projection. The protein resides in the cilium. Its subcellular location is the flagellum membrane. The catalysed reaction is K(+)(in) = K(+)(out). Its activity is regulated as follows. Regulated by changes in cytosolic pH; activated by alkalization. Activated by intracellular Ca(2+). Despite strong sequence similarity, human KCNU1 channels are significantly more sensitive to activation by internal Ca(2+) and less pH-sensitive than mouse KCNU1. VU0546110 acts as a selective inhibitor. The auxiliary subunit LRRC52 shifts the activation of KCNU1 to more negative potentials at a given pH. Testis-specific potassium channel activated by both intracellular pH and membrane voltage that mediates export of K(+). Represents the primary spermatozoan K(+) current. The channel underlies a pH-triggered membrane hyperpolarization during the process of sperm capacitation, as sperm encounter the alkaline environment near the ovum in the female reproductive tract, thereby playing an essential for male fertility. The sequence is that of Potassium channel subfamily U member 1 from Homo sapiens (Human).